The primary structure comprises 210 residues: Uridine kinase (210 aa).

An ATP-binding site is contributed by 12–19; sequence GGSGSGKT.

It belongs to the uridine kinase family.

The protein resides in the cytoplasm. The enzyme catalyses uridine + ATP = UMP + ADP + H(+). The catalysed reaction is cytidine + ATP = CMP + ADP + H(+). The protein operates within pyrimidine metabolism; CTP biosynthesis via salvage pathway; CTP from cytidine: step 1/3. Its pathway is pyrimidine metabolism; UMP biosynthesis via salvage pathway; UMP from uridine: step 1/1. This chain is Uridine kinase, found in Leuconostoc citreum (strain KM20).